A 289-amino-acid polypeptide reads, in one-letter code: uncharacterized protein (289 aa).

9 helical membrane passes run 4-24, 44-64, 68-88, 106-126, 138-158, 166-186, 196-216, 230-250, and 258-278; these read NLLAVLFALASALTIAWGTVV, LNALMTPMWWAGMSTAMLAYF, VALGFGTLLVVQPVLVLSLMF, IFWATLLTVAVGIMIVLGRPL, IPVLLVGVAVMGGMWLLAEYV, ILGLVTGALFGYVAVMSKAAV, GLILNWEGYGLILTALLGTIV, LPAMTIAEPIVAFSLGYLVLG, and WEWIAMGIALLVMIVSTIALS.

The protein localises to the cell membrane. This is an uncharacterized protein from Corynebacterium glutamicum (strain ATCC 13032 / DSM 20300 / JCM 1318 / BCRC 11384 / CCUG 27702 / LMG 3730 / NBRC 12168 / NCIMB 10025 / NRRL B-2784 / 534).